Consider the following 355-residue polypeptide: Nematocyst expressed protein 3 (355 aa).

Residues 1 to 18 (MKLTYILLIAVVGVAIEA) form the signal peptide. 3 consecutive ShKT domains span residues 50–89 (CKDVADDCKAFGKLEKDDENSCFNNPDKARNECPVSCKLC), 107–134 (QPQQCSQQSCYETPQWSVQNCAVTCQLC), and 140–182 (SGPV…CNTY). Disulfide bonds link Cys-50–Cys-89, Cys-57–Cys-82, Cys-71–Cys-86, Cys-116–Cys-131, Cys-149–Cys-175, and Cys-158–Cys-179. The propeptide occupies 92–355 (KRSKKQSDYM…KKSKSHKKQH (264 aa)). Positions 202–355 (YQPNAMPTPP…KKSKSHKKQH (154 aa)) are disordered. Positions 207-221 (MPTPPQGVTPAPLPP) are enriched in pro residues. Composition is skewed to low complexity over residues 222-232 (YFQQQGYGYPQ), 240-270 (VQPGQTQAPTAAQSTPAPVQTTPASGKTTTE), and 277-332 (TEAA…AQSD). Residues 335–355 (NKKKHKKDKAQKKSKSHKKQH) are compositionally biased toward basic residues.

This sequence belongs to the NEP3 family. In terms of tissue distribution, nematocytes. In late planulae, transcripts are found throughout the ectoderm in nematocytes, with high concentration of expressing cells in the oral pole. In primary polyps, is expressed in nematocytes in the body wall and physa ectoderm and in the upper and lower pharynx.

It localises to the nematocyst. Its subcellular location is the secreted. Its function is as follows. Neurotoxin. In vivo, induces pronounced contraction and tail twitching on zebrafish larvae, as well as death 5 hours later. This Nematostella vectensis (Starlet sea anemone) protein is Nematocyst expressed protein 3.